Reading from the N-terminus, the 259-residue chain is L-erythrulose-1-phosphate isomerase (259 aa).

The Electrophile role is filled by His102. The active-site Proton acceptor is the Glu174.

It belongs to the triosephosphate isomerase family.

The enzyme catalyses L-erythrulose 1-phosphate = D-erythrulose 4-phosphate. It participates in carbohydrate metabolism. In terms of biological role, involved in catabolism of D-apiose. Catalyzes the isomerization of L-erythrulose 1-phosphate to D-erythrulose 4-phosphate. This chain is L-erythrulose-1-phosphate isomerase, found in Pectobacterium atrosepticum (strain SCRI 1043 / ATCC BAA-672) (Erwinia carotovora subsp. atroseptica).